A 3391-amino-acid polypeptide reads, in one-letter code: Genome polyprotein (3391 aa).

The interaction with host EXOC1 stretch occupies residues 1-15 (MNNQRKKARNTPFNM). The Cytoplasmic portion of the chain corresponds to 1–101 (MNNQRKKARN…LNILNRRRRT (101 aa)). Positions 37–72 (MLQGRGPLKLFMALVAFLRFLTIPPTAGILKRWGTI) are hydrophobic; homodimerization of capsid protein C. Positions 101–114 (TAGMIIMLIPTVMA) are cleaved as a propeptide — ER anchor for the capsid protein C, removed in mature form by serine protease NS3. Residues 102-122 (AGMIIMLIPTVMAFHLTTRNG) form a helical membrane-spanning segment. Topologically, residues 123-238 (EPHMIVSRQE…GAWKHAQRIE (116 aa)) are extracellular. Residue Asn183 is glycosylated (N-linked (GlcNAc...) asparagine; by host). A helical membrane pass occupies residues 239 to 259 (TWILRHPGFTIMAAILAYTIG). Residues 260-265 (TTHFQR) lie on the Cytoplasmic side of the membrane. Residues 266-280 (ALIFILLTAVAPSMT) traverse the membrane as a helical segment. Residues 281–725 (MRCIGISNRD…LHQVFGAIYG (445 aa)) lie on the Extracellular side of the membrane. Cystine bridges form between Cys283–Cys310, Cys340–Cys401, Cys354–Cys385, and Cys372–Cys396. The N-linked (GlcNAc...) asparagine; by host glycan is linked to Asn347. A fusion peptide region spans residues 378–391 (DRGWGNGCGLFGKG). Asn433 carries an N-linked (GlcNAc...) asparagine; by host glycan. 2 disulfides stabilise this stretch: Cys465-Cys565 and Cys582-Cys613. Residues 726 to 746 (AAFSGVSWIMKILIGVIITWI) traverse the membrane as a helical segment. At 747-752 (GMNSRS) the chain is on the cytoplasmic side. The chain crosses the membrane as a helical span at residues 753–773 (TSLSVSLVLVGVVTLYLGVMV). Residues 774-1195 (QADSGCVVSW…MVGATMTDDI (422 aa)) lie on the Extracellular side of the membrane. 6 disulfide bridges follow: Cys779–Cys790, Cys830–Cys918, Cys954–Cys998, Cys1055–Cys1104, Cys1066–Cys1088, and Cys1087–Cys1091. N-linked (GlcNAc...) asparagine; by host glycans are attached at residues Asn905 and Asn982. The chain crosses the membrane as a helical span at residues 1196-1220 (GMGVTYLALLAAFKVRPTFAAGLLL). Topologically, residues 1221–1226 (RKLTSK) are cytoplasmic. The chain crosses the membrane as a helical span at residues 1227–1245 (ELMMTTIGIVLLSQSTIPE). Residues 1246 to 1269 (TILELTDALALGMMVLKMVRKMEK) are Lumenal-facing. A helical membrane pass occupies residues 1270–1290 (YQLAVTIMAILCVPNAVILQN). Ala1291 is a topological domain (cytoplasmic). A helical membrane pass occupies residues 1292-1310 (WKVSCTILAVVSVSPLFLT). The Lumenal portion of the chain corresponds to 1311–1317 (SSQQKAD). Residues 1318 to 1338 (WIPLALTIKGLNPTAIFLTTL) form a helical membrane-spanning segment. The Cytoplasmic segment spans residues 1339-1346 (SRTNKKRS). A helical membrane pass occupies residues 1347-1367 (WPLNEAIMAVGMVSILASSLL). Residues 1368 to 1370 (KND) are Lumenal-facing. A helical transmembrane segment spans residues 1371–1391 (IPMTGPLVAGGLLTVCYVLTG). The Cytoplasmic portion of the chain corresponds to 1392-1447 (RSADLELERAADVKWEDQAEISGSSPILSITISEDGSMSIKNEEEEQTLTILIRTG). The interacts with and activates NS3 protease stretch occupies residues 1398-1437 (LERAADVKWEDQAEISGSSPILSITISEDGSMSIKNEEEE). Positions 1448-1468 (LLVISGLFPVSIPITAAAWYL) form an intramembrane region, helical. The Cytoplasmic portion of the chain corresponds to 1469 to 2147 (WEVKKQRAGV…LSELPETLET (679 aa)). The Peptidase S7 domain maps to 1476–1653 (AGVLWDVPSP…EKSIEDNPEI (178 aa)). Catalysis depends on charge relay system; for serine protease NS3 activity residues His1526, Asp1550, and Ser1610. Positions 1655 to 1811 (DDIFRKRKLT…QSNAPIMDEE (157 aa)) constitute a Helicase ATP-binding domain. The interval 1659–1662 (RKRK) is important for RNA-binding. 1668–1675 (LHPGAGKT) lines the ATP pocket. The DEAH box signature appears at 1759–1762 (DEAH). A Helicase C-terminal domain is found at 1821–1988 (SGHEWVTDFK…IIPSMFEPER (168 aa)). An N6-acetyllysine; by host modification is found at Lys1863. A helical transmembrane segment spans residues 2148 to 2168 (LLLLTLLATVTGGIFLFLMSG). Residues 2169–2170 (RG) lie on the Lumenal side of the membrane. Positions 2171 to 2191 (IGKMTLGMCCIITASILLWYA) form an intramembrane region, helical. A topological domain (lumenal) is located at residue Gln2192. Residues 2193 to 2213 (IQPHWIAASIILEFFLIVLLI) traverse the membrane as a helical segment. The Cytoplasmic portion of the chain corresponds to 2214 to 2228 (PEPEKQRTPQDNQLT). A helical membrane pass occupies residues 2229-2249 (YVVIAILTVVAATMANEMGFL). Residues 2250–2274 (EKTKKDLGLGSITTQQPESNILDID) are Lumenal-facing. Positions 2275–2295 (LRPASAWTLYAVATTFVTPML) form an intramembrane region, helical. Topologically, residues 2296–2316 (RHSIENSSVNVSLTAIANQAT) are lumenal. N-linked (GlcNAc...) asparagine; by host glycosylation is found at Asn2301 and Asn2305. Residues 2317–2337 (VLMGLGKGWPLSKMDIGVPLL) constitute an intramembrane region (helical). Residues 2338 to 2347 (AIGCYSQVNP) are Lumenal-facing. The helical transmembrane segment at 2348–2368 (ITLTAALFLLVAHYAIIGPGL) threads the bilayer. At 2369-2413 (QAKATREAQKRAAAGIMKNPTVDGITVIDLDPIPYDPKFEKQLGQ) the chain is on the cytoplasmic side. A helical transmembrane segment spans residues 2414 to 2434 (VMLLVLCVTQVLMMRTTWALC). Residues 2435–2459 (EALTLATGPISTLWEGNPGRFWNTT) are Lumenal-facing. Asn2457 is a glycosylation site (N-linked (GlcNAc...) asparagine; by host). Residues 2460-2480 (IAVSMANIFRGSYLAGAGLLF) traverse the membrane as a helical segment. The Cytoplasmic portion of the chain corresponds to 2481–3391 (SIMKNTTNTR…KEEEEAGVLW (911 aa)). The 263-residue stretch at 2493–2755 (TGNIGETLGE…DVDLGSGTRN (263 aa)) folds into the mRNA cap 0-1 NS5-type MT domain. Ser2547 is an S-adenosyl-L-methionine binding site. Position 2547 is a phosphoserine (Ser2547). Lys2552 serves as the catalytic For 2'-O-MTase activity. Positions 2568 to 2571 (VVDL) match the SUMO-interacting motif motif. Gly2577, Trp2578, Thr2595, Lys2596, Asp2622, and Val2623 together coordinate S-adenosyl-L-methionine. The active-site For 2'-O-MTase activity is Asp2637. Ile2638 is an S-adenosyl-L-methionine binding site. Active-site for 2'-O-MTase activity residues include Lys2672 and Glu2708. Tyr2710 provides a ligand contact to S-adenosyl-L-methionine. 4 residues coordinate Zn(2+): Glu2929, His2933, Cys2938, and Cys2941. The RdRp catalytic domain maps to 3019 to 3168 (GAMYADDTAG…KPLDDRFASA (150 aa)). His3203, Cys3219, and Cys3338 together coordinate Zn(2+).

It in the N-terminal section; belongs to the class I-like SAM-binding methyltransferase superfamily. mRNA cap 0-1 NS5-type methyltransferase family. As to quaternary structure, homodimer. Interacts (via N-terminus) with host EXOC1 (via C-terminus); this interaction results in EXOC1 degradation through the proteasome degradation pathway. In terms of assembly, forms heterodimers with envelope protein E in the endoplasmic reticulum and Golgi. Homodimer; in the endoplasmic reticulum and Golgi. Interacts with protein prM. Interacts with non-structural protein 1. As to quaternary structure, homodimer; Homohexamer when secreted. Interacts with envelope protein E. Interacts with host PRKAA1. In terms of assembly, interacts (via N-terminus) with serine protease NS3. Forms a heterodimer with serine protease NS3. May form homooligomers. As to quaternary structure, forms a heterodimer with NS2B. Interacts with NS4B. Interacts with unphosphorylated RNA-directed RNA polymerase NS5; this interaction stimulates RNA-directed RNA polymerase NS5 guanylyltransferase activity. Interacts with host SHFL. In terms of assembly, interacts with host MAVS; this interaction inhibits the synthesis of IFN-beta. Interacts with host MAVS; this interaction inhibits the synthesis of IFN-beta. Interacts with host SHFL. Interacts with host AUP1; the interaction occurs in the presence of Dengue virus NS4B and induces lipophagy which facilitates production of virus progeny particles. May interact with host SRPRA and SEC61G. Interacts with serine protease NS. As to quaternary structure, homodimer. Interacts with host STAT2; this interaction inhibits the phosphorylation of the latter, and, when all viral proteins are present (polyprotein), targets STAT2 for degradation. Interacts with serine protease NS3. Interacts with host PAF1 complex; the interaction may prevent the recruitment of the PAF1 complex to interferon-responsive genes, and thus reduces the immune response. Post-translationally, specific enzymatic cleavages in vivo yield mature proteins. Cleavages in the lumen of endoplasmic reticulum are performed by host signal peptidase, whereas cleavages in the cytoplasmic side are performed by serine protease NS3. Signal cleavage at the 2K-4B site requires a prior NS3 protease-mediated cleavage at the 4A-2K site. In terms of processing, cleaved in post-Golgi vesicles by a host furin, releasing the mature small envelope protein M, and peptide pr. This cleavage is incomplete as up to 30% of viral particles still carry uncleaved prM. N-glycosylated. Post-translationally, N-glycosylated. The excreted form is glycosylated and this is required for efficient secretion of the protein from infected cells. In terms of processing, acetylated by host KAT5. Acetylation modulates NS3 RNA-binding and unwinding activities and plays an important positive role for viral replication. Sumoylation of RNA-directed RNA polymerase NS5 increases NS5 protein stability allowing proper viral RNA replication. Post-translationally, phosphorylated on serines residues. This phosphorylation may trigger NS5 nuclear localization.

Its subcellular location is the virion. It localises to the host nucleus. It is found in the host cytoplasm. The protein localises to the host perinuclear region. The protein resides in the secreted. Its subcellular location is the virion membrane. It localises to the host endoplasmic reticulum membrane. It is found in the host mitochondrion. The catalysed reaction is Selective hydrolysis of -Xaa-Xaa-|-Yaa- bonds in which each of the Xaa can be either Arg or Lys and Yaa can be either Ser or Ala.. It catalyses the reaction RNA(n) + a ribonucleoside 5'-triphosphate = RNA(n+1) + diphosphate. The enzyme catalyses a ribonucleoside 5'-triphosphate + H2O = a ribonucleoside 5'-diphosphate + phosphate + H(+). It carries out the reaction ATP + H2O = ADP + phosphate + H(+). The catalysed reaction is a 5'-end (5'-triphosphoguanosine)-ribonucleoside in mRNA + S-adenosyl-L-methionine = a 5'-end (N(7)-methyl 5'-triphosphoguanosine)-ribonucleoside in mRNA + S-adenosyl-L-homocysteine. It catalyses the reaction a 5'-end (N(7)-methyl 5'-triphosphoguanosine)-ribonucleoside in mRNA + S-adenosyl-L-methionine = a 5'-end (N(7)-methyl 5'-triphosphoguanosine)-(2'-O-methyl-ribonucleoside) in mRNA + S-adenosyl-L-homocysteine + H(+). Plays a role in virus budding by binding to the cell membrane and gathering the viral RNA into a nucleocapsid that forms the core of a mature virus particle. During virus entry, may induce genome penetration into the host cytoplasm after hemifusion induced by the surface proteins. Can migrate to the cell nucleus where it modulates host functions. Overcomes the anti-viral effects of host EXOC1 by sequestering and degrading the latter through the proteasome degradation pathway. Its function is as follows. Inhibits RNA silencing by interfering with host Dicer. In terms of biological role, prevents premature fusion activity of envelope proteins in trans-Golgi by binding to envelope protein E at pH6.0. After virion release in extracellular space, gets dissociated from E dimers. Functionally, acts as a chaperone for envelope protein E during intracellular virion assembly by masking and inactivating envelope protein E fusion peptide. prM is the only viral peptide matured by host furin in the trans-Golgi network probably to avoid catastrophic activation of the viral fusion activity in acidic Golgi compartment prior to virion release. prM-E cleavage is inefficient, and many virions are only partially matured. These uncleaved prM would play a role in immune evasion. May play a role in virus budding. Exerts cytotoxic effects by activating a mitochondrial apoptotic pathway through M ectodomain. May display a viroporin activity. Its function is as follows. Binds to host cell surface receptor and mediates fusion between viral and cellular membranes. Envelope protein is synthesized in the endoplasmic reticulum in the form of heterodimer with protein prM. They play a role in virion budding in the ER, and the newly formed immature particle is covered with 60 spikes composed of heterodimer between precursor prM and envelope protein E. The virion is transported to the Golgi apparatus where the low pH causes dissociation of PrM-E heterodimers and formation of E homodimers. prM-E cleavage is inefficient, and many virions are only partially matured. These uncleaved prM would play a role in immune evasion. In terms of biological role, involved in immune evasion, pathogenesis and viral replication. Once cleaved off the polyprotein, is targeted to three destinations: the viral replication cycle, the plasma membrane and the extracellular compartment. Essential for viral replication. Required for formation of the replication complex and recruitment of other non-structural proteins to the ER-derived membrane structures. Excreted as a hexameric lipoparticle that plays a role against host immune response. Antagonizing the complement function. Binds to the host macrophages and dendritic cells. Inhibits signal transduction originating from Toll-like receptor 3 (TLR3). Mediates complement activation, which may contribute to the pathogenesis of the vascular leakage that occurs in severe dengue disease. Activates autophagy through the AMPK/ERK/mTOR signaling pathway. Mechanistically, acts as the assembly platform for STK11-AMPK interactions and promotes STK11-AMPK interactions. In turn, promotes phosphorylation of the AMPK kinase structural domain and activates AMPK, thereby positively regulating the AMPK/ERK/mTOR signaling pathway and inducing autophagy. Functionally, disrupts the host endothelial glycocalyx layer of host pulmonary microvascular endothelial cells, inducing degradation of sialic acid and shedding of heparan sulfate proteoglycans. NS1 induces expression of sialidases, heparanase, and activates cathepsin L, which activates heparanase via enzymatic cleavage. These effects are probably linked to the endothelial hyperpermeability observed in severe dengue disease. Component of the viral RNA replication complex that functions in virion assembly and antagonizes the host immune response. Its function is as follows. Required cofactor for the serine protease function of NS3. May have membrane-destabilizing activity and form viroporins. In terms of biological role, displays three enzymatic activities: serine protease, NTPase and RNA helicase. NS3 serine protease, in association with NS2B, performs its autocleavage and cleaves the polyprotein at dibasic sites in the cytoplasm: C-prM, NS2A-NS2B, NS2B-NS3, NS3-NS4A, NS4A-2K and NS4B-NS5. NS3 RNA helicase binds RNA and unwinds dsRNA in the 3' to 5' direction. Functionally, regulates the ATPase activity of the NS3 helicase activity. NS4A allows NS3 helicase to conserve energy during unwinding. Plays a role in the inhibition of the host innate immune response. Interacts with host MAVS and thereby prevents the interaction between RIGI and MAVS. In turn, IFN-beta production is impaired. Interacts with host AUP1 which mediates induction of lipophagy in host cells and facilitates production of virus progeny particles. Functions as a signal peptide for NS4B and is required for the interferon antagonism activity of the latter. Its function is as follows. Induces the formation of ER-derived membrane vesicles where the viral replication takes place. Inhibits interferon (IFN)-induced host STAT1 phosphorylation and nuclear translocation, thereby preventing the establishment of cellular antiviral state by blocking the IFN-alpha/beta pathway. In terms of biological role, replicates the viral (+) and (-) RNA genome, and performs the capping of genomes in the cytoplasm. NS5 methylates viral RNA cap at guanine N-7 and ribose 2'-O positions. Besides its role in RNA genome replication, also prevents the establishment of cellular antiviral state by blocking the interferon-alpha/beta (IFN-alpha/beta) signaling pathway. Inhibits host TYK2 and STAT2 phosphorylation, thereby preventing activation of JAK-STAT signaling pathway. May reduce immune responses by preventing the recruitment of the host PAF1 complex to interferon-responsive genes. The protein is Genome polyprotein of Aedimorphus (Red guenon).